Consider the following 500-residue polypeptide: Adenylosuccinate synthetase, chloroplastic (500 aa).

Residues 87–93 (GDEGKGK) and 115–117 (GHT) contribute to the GTP site. Aspartate 88 functions as the Proton acceptor in the catalytic mechanism. Mg(2+) contacts are provided by aspartate 88 and glycine 115. IMP contacts are provided by residues 88–91 (DEGK), 113–116 (NAGH), threonine 205, arginine 219, glutamine 299, threonine 314, and arginine 378. Residue histidine 116 is the Proton donor of the active site. 374–380 (TTTGRPR) contacts substrate. Residues arginine 380, 406-408 (KLD), and 489-491 (GIG) contribute to the GTP site.

Belongs to the adenylosuccinate synthetase family. In terms of assembly, homodimer. Requires Mg(2+) as cofactor.

The protein resides in the plastid. It localises to the chloroplast. The enzyme catalyses IMP + L-aspartate + GTP = N(6)-(1,2-dicarboxyethyl)-AMP + GDP + phosphate + 2 H(+). Its pathway is purine metabolism; AMP biosynthesis via de novo pathway; AMP from IMP: step 1/2. Plays an important role in the de novo pathway and in the salvage pathway of purine nucleotide biosynthesis. Catalyzes the first committed step in the biosynthesis of AMP from IMP. In Solanum bulbocastanum (Wild potato), this protein is Adenylosuccinate synthetase, chloroplastic.